Reading from the N-terminus, the 279-residue chain is 4-hydroxy-3-methylbut-2-enyl diphosphate reductase (279 aa).

Position 12 (C12) interacts with [4Fe-4S] cluster. (2E)-4-hydroxy-3-methylbut-2-enyl diphosphate contacts are provided by H40 and H70. The dimethylallyl diphosphate site is built by H40 and H70. H40 and H70 together coordinate isopentenyl diphosphate. C92 provides a ligand contact to [4Fe-4S] cluster. (2E)-4-hydroxy-3-methylbut-2-enyl diphosphate is bound at residue H119. A dimethylallyl diphosphate-binding site is contributed by H119. Residue H119 coordinates isopentenyl diphosphate. The Proton donor role is filled by E121. T151 contacts (2E)-4-hydroxy-3-methylbut-2-enyl diphosphate. C181 is a binding site for [4Fe-4S] cluster. (2E)-4-hydroxy-3-methylbut-2-enyl diphosphate contacts are provided by S209, S210, N211, and S251. 4 residues coordinate dimethylallyl diphosphate: S209, S210, N211, and S251. The isopentenyl diphosphate site is built by S209, S210, N211, and S251.

This sequence belongs to the IspH family. It depends on [4Fe-4S] cluster as a cofactor.

The enzyme catalyses isopentenyl diphosphate + 2 oxidized [2Fe-2S]-[ferredoxin] + H2O = (2E)-4-hydroxy-3-methylbut-2-enyl diphosphate + 2 reduced [2Fe-2S]-[ferredoxin] + 2 H(+). The catalysed reaction is dimethylallyl diphosphate + 2 oxidized [2Fe-2S]-[ferredoxin] + H2O = (2E)-4-hydroxy-3-methylbut-2-enyl diphosphate + 2 reduced [2Fe-2S]-[ferredoxin] + 2 H(+). The protein operates within isoprenoid biosynthesis; dimethylallyl diphosphate biosynthesis; dimethylallyl diphosphate from (2E)-4-hydroxy-3-methylbutenyl diphosphate: step 1/1. Its pathway is isoprenoid biosynthesis; isopentenyl diphosphate biosynthesis via DXP pathway; isopentenyl diphosphate from 1-deoxy-D-xylulose 5-phosphate: step 6/6. Its function is as follows. Catalyzes the conversion of 1-hydroxy-2-methyl-2-(E)-butenyl 4-diphosphate (HMBPP) into a mixture of isopentenyl diphosphate (IPP) and dimethylallyl diphosphate (DMAPP). Acts in the terminal step of the DOXP/MEP pathway for isoprenoid precursor biosynthesis. This chain is 4-hydroxy-3-methylbut-2-enyl diphosphate reductase, found in Thermotoga neapolitana (strain ATCC 49049 / DSM 4359 / NBRC 107923 / NS-E).